Consider the following 896-residue polypeptide: Translation initiation factor IF-2 (896 aa).

Disordered stretches follow at residues 32 to 99 (LAQA…TALP) and 117 to 304 (EITS…KQAE). The span at 35–48 (AGSSDTKNSPASKA) shows a compositional bias: polar residues. A compositionally biased stretch (basic and acidic residues) spans 153–169 (TPERIEETPIIRTRTEP). Residues 203-214 (AASTEETTQQQP) are compositionally biased toward low complexity. Over residues 215–227 (RQNDAASHNNKQQ) the composition is skewed to polar residues. Residues 228–241 (PSGTSSRPASSAPS) are compositionally biased toward low complexity. The segment covering 256-280 (RGSERDRSKRSDESVKAFTGRDRYG) has biased composition (basic and acidic residues). The tr-type G domain maps to 401-570 (IRSPIVAFMG…ALQAEVLELK (170 aa)). Residues 410-417 (GHVDHGKT) form a G1 region. A GTP-binding site is contributed by 410 to 417 (GHVDHGKT). The G2 stretch occupies residues 435 to 439 (AITQH). The tract at residues 456 to 459 (DTPG) is G3. GTP contacts are provided by residues 456 to 460 (DTPGH) and 510 to 513 (NKCD). The G4 stretch occupies residues 510 to 513 (NKCD). Positions 546-548 (SAK) are G5.

The protein belongs to the TRAFAC class translation factor GTPase superfamily. Classic translation factor GTPase family. IF-2 subfamily.

The protein localises to the cytoplasm. In terms of biological role, one of the essential components for the initiation of protein synthesis. Protects formylmethionyl-tRNA from spontaneous hydrolysis and promotes its binding to the 30S ribosomal subunits. Also involved in the hydrolysis of GTP during the formation of the 70S ribosomal complex. The protein is Translation initiation factor IF-2 of Chlamydia trachomatis serovar L2 (strain ATCC VR-902B / DSM 19102 / 434/Bu).